The sequence spans 597 residues: Protein IQ-DOMAIN 29 (597 aa).

The disordered stretch occupies residues 1-31 (MGKTPSPGKWIKSLLGKKSSKSSLEKGGEKL). IQ domains follow at residues 106-134 (LEEA…GITR), 135-153 (VQAV…ATYS), and 157-183 (GIVK…QKTN). The interval 159–173 (VKVQALVRGKKARSS) is calmodulin-binding. A Nuclear localization signal 1 motif is present at residues 264–271 (KKRSFQAV). Disordered regions lie at residues 268–379 (FQAV…KKEI) and 407–597 (LIPV…EWKR). A compositionally biased stretch (low complexity) spans 289 to 300 (STTANSSTSRST). The segment covering 319–329 (ELSKIENDKSK) has biased composition (basic and acidic residues). Positions 356–363 (HKKASLSN) match the Nuclear localization signal 2 motif. Positions 414 to 463 (KESDLDKDEKSLVLDKPEQDELRTAERDDKAEEELKTAERDDSAEEKIQE) are enriched in basic and acidic residues. Over residues 467 to 480 (QISSENGNVASENT) the composition is skewed to polar residues. The span at 481–500 (KPSDRRASLPAKIENHHQDD) shows a compositional bias: basic and acidic residues. Polar residues predominate over residues 572-584 (GSMNSDRSFSSSK). Residues 585 to 597 (DIGDKSTKAEWKR) are compositionally biased toward basic and acidic residues.

This sequence belongs to the IQD family. In terms of assembly, binds to multiple calmodulin (CaM) in the presence of Ca(2+) and CaM-like proteins.

Its subcellular location is the nucleus. The protein localises to the nucleus envelope. It is found in the cytoplasm. The protein resides in the cytoskeleton. It localises to the cell membrane. Its function is as follows. May be involved in cooperative interactions with calmodulins or calmodulin-like proteins. Recruits calmodulin proteins to microtubules, thus being a potential scaffold in cellular signaling and trafficking. May associate with nucleic acids and regulate gene expression at the transcriptional or post-transcriptional level. This Arabidopsis thaliana (Mouse-ear cress) protein is Protein IQ-DOMAIN 29.